Reading from the N-terminus, the 65-residue chain is Large ribosomal subunit protein bL31 (65 aa).

Cys-16, Cys-18, Cys-36, and Cys-39 together coordinate Zn(2+).

Belongs to the bacterial ribosomal protein bL31 family. Type A subfamily. As to quaternary structure, part of the 50S ribosomal subunit. Requires Zn(2+) as cofactor.

Functionally, binds the 23S rRNA. The polypeptide is Large ribosomal subunit protein bL31 (Desulfitobacterium hafniense (strain DSM 10664 / DCB-2)).